The chain runs to 395 residues: General transcription factor IIH subunit 2-like protein (395 aa).

In terms of domain architecture, VWFA spans 60–236 (HLYVVVDGSR…HYKELLTHHL (177 aa)). Tyr-95 carries the post-translational modification Phosphotyrosine. The segment at 291–308 (CPQCRAKYCELPVECKIC) adopts a C4-type zinc-finger fold.

This sequence belongs to the GTF2H2 family.

The protein localises to the nucleus. In terms of biological role, component of the core-TFIIH basal transcription factor involved in nucleotide excision repair (NER) of DNA and, when complexed to CAK, in RNA transcription by RNA polymerase II. This Homo sapiens (Human) protein is General transcription factor IIH subunit 2-like protein (GTF2H2C).